The sequence spans 179 residues: Bifunctional protein PyrR (179 aa).

Positions 100–112 (VILVDDVLFTGRT) match the PRPP-binding motif.

The protein belongs to the purine/pyrimidine phosphoribosyltransferase family. PyrR subfamily.

It carries out the reaction UMP + diphosphate = 5-phospho-alpha-D-ribose 1-diphosphate + uracil. Functionally, regulates the transcription of the pyrimidine nucleotide (pyr) operon in response to exogenous pyrimidines. Its function is as follows. Also displays a weak uracil phosphoribosyltransferase activity which is not physiologically significant. This chain is Bifunctional protein PyrR, found in Actinobacillus succinogenes (strain ATCC 55618 / DSM 22257 / CCUG 43843 / 130Z).